The chain runs to 230 residues: 2,3-bisphosphoglycerate-dependent phosphoglycerate mutase 1 (230 aa).

Residues 8–15 (RHGQSEWN), 21–22 (TG), R60, 87–90 (ERHY), K98, 114–115 (RR), and 183–184 (GN) contribute to the substrate site. H9 acts as the Tele-phosphohistidine intermediate in catalysis. The active-site Proton donor/acceptor is E87.

The protein belongs to the phosphoglycerate mutase family. BPG-dependent PGAM subfamily.

The enzyme catalyses (2R)-2-phosphoglycerate = (2R)-3-phosphoglycerate. It functions in the pathway carbohydrate degradation; glycolysis; pyruvate from D-glyceraldehyde 3-phosphate: step 3/5. Functionally, catalyzes the interconversion of 2-phosphoglycerate and 3-phosphoglycerate. The protein is 2,3-bisphosphoglycerate-dependent phosphoglycerate mutase 1 of Lactobacillus johnsonii (strain CNCM I-12250 / La1 / NCC 533).